The following is a 28-amino-acid chain: KRGFLDVIKHVGKAALSVVSHLINEGEH.

A Glutamic acid 1-amide modification is found at glutamate 25. The propeptide occupies 27–28 (EH).

As to expression, expressed by the skin glands.

It is found in the secreted. In terms of biological role, has antimicrobial activity. This chain is Cruzioseptin-4, found in Cruziohyla calcarifer (Splendid leaf frog).